The following is a 174-amino-acid chain: MLNWIDTAPRRILALISAACVAMLAFGMYLQHVVGLEPCPMCIVQRYALIGVAVFAGLASARGQKGWWMTWSVLALVAAGFGAFVAARQSWLQWYPPEIATCGRDFYGMIENYPISRAIPMIFRGSGDCTAVDWTFLGGSIANWSFVWFLLFAVLLLVLLVRGGRGAPDTLARA.

At M1–I12 the chain is on the cytoplasmic side. Residues L13–Y29 traverse the membrane as a helical segment. Residues L30 to Y47 are Periplasmic-facing. C39 and C42 are disulfide-bonded. Residues A48 to Q64 traverse the membrane as a helical segment. Over K65 to M69 the chain is Cytoplasmic. Residues T70–A87 traverse the membrane as a helical segment. Residues R88 to N143 are Periplasmic-facing. A disulfide bond links C102 and C129. A helical transmembrane segment spans residues W144–R162. The Cytoplasmic portion of the chain corresponds to G163 to A174.

The protein belongs to the DsbB family.

The protein localises to the cell inner membrane. In terms of biological role, required for disulfide bond formation in some periplasmic proteins. Acts by oxidizing the DsbA protein. In Acidovorax sp. (strain JS42), this protein is Disulfide bond formation protein B.